A 219-amino-acid chain; its full sequence is Pyridoxine/pyridoxamine 5'-phosphate oxidase (219 aa).

Substrate contacts are provided by residues 13 to 16 and K76; that span reads RVEY. Residues 71-76, 86-87, K93, and Q115 contribute to the FMN site; these read RSVLCK and FT. Residues Y133, R137, and S141 each contribute to the substrate site. FMN contacts are provided by residues 150 to 151 and W196; that span reads QS. 202-204 lines the substrate pocket; it reads RVH. R206 is an FMN binding site.

It belongs to the pyridoxamine 5'-phosphate oxidase family. Homodimer. Requires FMN as cofactor.

It carries out the reaction pyridoxamine 5'-phosphate + O2 + H2O = pyridoxal 5'-phosphate + H2O2 + NH4(+). The catalysed reaction is pyridoxine 5'-phosphate + O2 = pyridoxal 5'-phosphate + H2O2. It participates in cofactor metabolism; pyridoxal 5'-phosphate salvage; pyridoxal 5'-phosphate from pyridoxamine 5'-phosphate: step 1/1. Its pathway is cofactor metabolism; pyridoxal 5'-phosphate salvage; pyridoxal 5'-phosphate from pyridoxine 5'-phosphate: step 1/1. In terms of biological role, catalyzes the oxidation of either pyridoxine 5'-phosphate (PNP) or pyridoxamine 5'-phosphate (PMP) into pyridoxal 5'-phosphate (PLP). The sequence is that of Pyridoxine/pyridoxamine 5'-phosphate oxidase from Mycobacterium leprae (strain TN).